An 833-amino-acid polypeptide reads, in one-letter code: AdoMet-dependent rRNA methyltransferase SPB1 (833 aa).

Positions 59, 61, 79, 95, and 120 each coordinate S-adenosyl-L-methionine. Lys160 acts as the Proton acceptor in catalysis. 2 coiled-coil regions span residues 348–389 and 453–481; these read EEEQ…QLNM and RDEL…SERD. Basic and acidic residues predominate over residues 477–493; sequence KSERDAKFRAKQARESS. Disordered regions lie at residues 477 to 532, 592 to 645, and 776 to 810; these read KSER…SDDD, KRKL…EKHS, and VTKK…GKYK. Acidic residues-rich tracts occupy residues 505–532 and 622–634; these read QSDE…SDDD and EDGD…DSEE. Positions 635–645 are enriched in basic and acidic residues; the sequence is EAKRTKQEKHS. The stretch at 730–782 forms a coiled coil; the sequence is AEAKARKKHRAVARLEKLKKKAGLINDDSDKSEKDKAEEIAKLMRKVTKKAKQ.

It belongs to the class I-like SAM-binding methyltransferase superfamily. RNA methyltransferase RlmE family. SPB1 subfamily. In terms of assembly, component of the nucleolar and nucleoplasmic pre-60S ribosomal particle.

The protein localises to the nucleus. It localises to the nucleolus. It catalyses the reaction a ribonucleotide in rRNA + S-adenosyl-L-methionine = a 2'-O-methylribonucleotide in rRNA + S-adenosyl-L-homocysteine + H(+). Required for proper assembly of pre-ribosomal particles during the biogenesis of the 60S ribosomal subunit. The sequence is that of AdoMet-dependent rRNA methyltransferase SPB1 from Kluyveromyces lactis (strain ATCC 8585 / CBS 2359 / DSM 70799 / NBRC 1267 / NRRL Y-1140 / WM37) (Yeast).